We begin with the raw amino-acid sequence, 227 residues long: PKHD-type hydroxylase GDI1238/Gdia_1949 (227 aa).

The Fe2OG dioxygenase domain maps to 78–178 (RVVPPLFNRY…RLASFFWTQS (101 aa)). Fe cation contacts are provided by His-96, Asp-98, and His-159. 2-oxoglutarate is bound at residue Arg-169.

It depends on Fe(2+) as a cofactor. L-ascorbate serves as cofactor.

The protein is PKHD-type hydroxylase GDI1238/Gdia_1949 of Gluconacetobacter diazotrophicus (strain ATCC 49037 / DSM 5601 / CCUG 37298 / CIP 103539 / LMG 7603 / PAl5).